The chain runs to 252 residues: Geranylgeranylglyceryl phosphate synthase (252 aa).

Mg(2+) contacts are provided by D27 and S56. Sn-glycerol 1-phosphate-binding positions include 175-181 (YLEAGSG), 206-207 (GG), and 228-229 (GT).

This sequence belongs to the GGGP/HepGP synthase family. Group II subfamily. Requires Mg(2+) as cofactor.

Its subcellular location is the cytoplasm. It catalyses the reaction sn-glycerol 1-phosphate + (2E,6E,10E)-geranylgeranyl diphosphate = sn-3-O-(geranylgeranyl)glycerol 1-phosphate + diphosphate. It participates in membrane lipid metabolism; glycerophospholipid metabolism. Functionally, prenyltransferase that catalyzes the transfer of the geranylgeranyl moiety of geranylgeranyl diphosphate (GGPP) to the C3 hydroxyl of sn-glycerol-1-phosphate (G1P). This reaction is the first ether-bond-formation step in the biosynthesis of archaeal membrane lipids. The chain is Geranylgeranylglyceryl phosphate synthase from Pyrococcus abyssi (strain GE5 / Orsay).